The chain runs to 314 residues: Homoserine kinase (314 aa).

Residue 96-106 (PIGSGLGSSAC) coordinates ATP.

It belongs to the GHMP kinase family. Homoserine kinase subfamily.

The protein resides in the cytoplasm. It carries out the reaction L-homoserine + ATP = O-phospho-L-homoserine + ADP + H(+). It participates in amino-acid biosynthesis; L-threonine biosynthesis; L-threonine from L-aspartate: step 4/5. In terms of biological role, catalyzes the ATP-dependent phosphorylation of L-homoserine to L-homoserine phosphate. The sequence is that of Homoserine kinase from Histophilus somni (strain 129Pt) (Haemophilus somnus).